Here is a 117-residue protein sequence, read N- to C-terminus: Large ribosomal subunit protein uL24 (117 aa).

It belongs to the universal ribosomal protein uL24 family. Part of the 50S ribosomal subunit.

One of two assembly initiator proteins, it binds directly to the 5'-end of the 23S rRNA, where it nucleates assembly of the 50S subunit. Functionally, one of the proteins that surrounds the polypeptide exit tunnel on the outside of the subunit. This chain is Large ribosomal subunit protein uL24, found in Thermosynechococcus vestitus (strain NIES-2133 / IAM M-273 / BP-1).